The chain runs to 449 residues: N-succinylarginine dihydrolase (449 aa).

Substrate contacts are provided by residues Gly-19–Ser-28, Asn-110, and His-137–Arg-138. A disordered region spans residues Tyr-23 to Arg-43. Over residues Ala-27 to Asn-37 the composition is skewed to low complexity. Residue Glu-174 is part of the active site. Arg-214 serves as a coordination point for substrate. His-250 is an active-site residue. Residues Asp-252 and Asn-365 each contribute to the substrate site. The active-site Nucleophile is Cys-371.

It belongs to the succinylarginine dihydrolase family. As to quaternary structure, homodimer.

It carries out the reaction N(2)-succinyl-L-arginine + 2 H2O + 2 H(+) = N(2)-succinyl-L-ornithine + 2 NH4(+) + CO2. It functions in the pathway amino-acid degradation; L-arginine degradation via AST pathway; L-glutamate and succinate from L-arginine: step 2/5. Catalyzes the hydrolysis of N(2)-succinylarginine into N(2)-succinylornithine, ammonia and CO(2). In Pseudomonas putida (strain ATCC 700007 / DSM 6899 / JCM 31910 / BCRC 17059 / LMG 24140 / F1), this protein is N-succinylarginine dihydrolase.